A 251-amino-acid chain; its full sequence is Capsid protein (251 aa).

Positions Lys-3 to Thr-20 match the Bipartite nuclear localization signal motif. A Nuclear localization signal motif is present at residues Arg-35–Arg-49. A zinc finger lies at Cys-63–His-80. Residues Ile-96–Met-117 carry the Nuclear export signal motif. The Bipartite nuclear localization signal motif lies at Arg-195 to Arg-242.

This sequence belongs to the geminiviridae capsid protein family. In terms of assembly, homomultimer. Binds to single-stranded and double-stranded viral DNA. Interacts (via nuclear localization signals) with host importin alpha-1a.

The protein resides in the virion. The protein localises to the host nucleus. Functionally, encapsidates the viral DNA into characteristic twinned ('geminate') particles. Binds the genomic viral ssDNA and shuttles it into and out of the cell nucleus. The CP of bipartite geminiviruses is not required for cell-to-cell or systemic movement. This chain is Capsid protein, found in Capsicum annuum (Capsicum pepper).